The sequence spans 124 residues: Large ribosomal subunit protein bL12 (124 aa).

The protein belongs to the bacterial ribosomal protein bL12 family. In terms of assembly, homodimer. Part of the ribosomal stalk of the 50S ribosomal subunit. Forms a multimeric L10(L12)X complex, where L10 forms an elongated spine to which 2 to 4 L12 dimers bind in a sequential fashion. Binds GTP-bound translation factors.

Functionally, forms part of the ribosomal stalk which helps the ribosome interact with GTP-bound translation factors. Is thus essential for accurate translation. This Paracoccus denitrificans (strain Pd 1222) protein is Large ribosomal subunit protein bL12.